Consider the following 743-residue polypeptide: POU domain, class 2, transcription factor 1 (743 aa).

The span at 1–11 (MNNPSETSKPS) shows a compositional bias: polar residues. Disordered regions lie at residues 1–34 (MNNP…QPVP), 67–95 (SLNV…SVQA), 258–283 (ATPI…EEPS), and 357–381 (SSDS…RRRK). Over residues 81–95 (SQQPSQPSQQPSVQA) the composition is skewed to low complexity. Phosphothreonine is present on residues threonine 270 and threonine 276. The POU-specific domain maps to 280–354 (EEPSDLEELE…LLEKWLNDAE (75 aa)). Serine 283 is subject to Phosphoserine. A compositionally biased stretch (low complexity) spans 357 to 371 (SSDSSLSSPSALNSP). Residues 379–438 (RRKKRTSIETNIRVALEKSFLENQKPTSEEITMIADQLNMEKEVIRVWFCNRRQKEKRIN) constitute a DNA-binding region (homeobox). Residues serine 385 and serine 448 each carry the phosphoserine modification. Residues 494 to 504 (VTGTSDTTSNN) are compositionally biased toward polar residues. The disordered stretch occupies residues 494–557 (VTGTSDTTSN…TTSTPLSSPL (64 aa)). Over residues 505-557 (TATVISTAPPASSAVTSPSLSPSPSASASTSEASSASETSTTQTTSTPLSSPL) the composition is skewed to low complexity.

Belongs to the POU transcription factor family. Class-2 subfamily. In terms of assembly, interacts with POU2AF1; the interaction increases POU2F1 transactivation activity. Interacts with NR3C1, AR, PGR and HCFC1. (Microbial infection) Associates with the herpes simplex virus VP16-induced complex; binding to HCFC1 activates the viral transcriptional activator VP16 for association with POU2F1, to form a multiprotein-DNA complex responsible for activating transcription of the viral immediate early genes. As to quaternary structure, (Microbial infection) Interacts with human herpesvirus 8 (KSHV) protein RTA/ORF50; this interaction enhances RTA/ORF50-mediated transactivation of several viral promoters including K-bZIP promoter. Phosphorylated by PRKDC. Ubiquitous. Isoform 2 is lymphocyte-specific.

It is found in the nucleus. Functionally, transcription factor that binds to the octamer motif (5'-ATTTGCAT-3') and activates the promoters of the genes for some small nuclear RNAs (snRNA) and of genes such as those for histone H2B and immunoglobulins. Modulates transcription transactivation by NR3C1, AR and PGR. In terms of biological role, (Microbial infection) In case of human herpes simplex virus (HSV) infection, POU2F1 forms a multiprotein-DNA complex with the viral transactivator protein VP16 and HCFC1 thereby enabling the transcription of the viral immediate early genes. The protein is POU domain, class 2, transcription factor 1 (POU2F1) of Homo sapiens (Human).